The chain runs to 383 residues: Adaptive-response sensory kinase SasA (383 aa).

Residues 161 to 383 (MLAHDLRSPL…SFHFTLPVYR (223 aa)) form the Histidine kinase domain. Position 164 is a phosphohistidine; by autocatalysis (His-164).

In terms of assembly, homooligomerizes. Interacts with KaiC1. Interacts with KaiC1 and RpaA. Binds to the B-loop in the CI domain of KaiC; SasA and KaiB compete to bind to the CI domain.

The enzyme catalyses ATP + protein L-histidine = ADP + protein N-phospho-L-histidine.. Functionally, member of the two-component regulatory system SasA/RpaA involved in genome-wide circadian gene expression. One of several clock output pathways. Participates in the Kai clock protein complex, the main circadian regulator in cyanobacteria, via its interaction with KaiC. KaiC enhances the autophosphorylation activity of SasA, which then transfers its phosphate group to RpaA to activate it. In addition to its output function, recruits fold-shifted KaiB (KaiB(fs)) to KaiC to cooperatively form the KaiB(6):KaiC(6) complex (independent of SasA kinase activity). Required for robustness of the circadian rhythm of gene expression and is involved in clock output, also required for adaptation to light/dark cycles. Plays an important role in glucose metabolism, important for expression of genes involved in glycolysis, gluconeogenesis, the oxidative pentose phosphate pathway, and glycogen metabolism. Required for heterotrophic growth. Overexpression from the psbAII promoter leads to altered levels of genes involved in carbon metabolism, increased levels of transcripts for clock oscillator genes in the light and the dark, complete loss of glycogen accumulation, decreased levels of metabolites of sugar catabolism and increased levels of amino acids in the light and increased levels of SigE protein. In Synechocystis sp. (strain ATCC 27184 / PCC 6803 / Kazusa), this protein is Adaptive-response sensory kinase SasA.